The following is a 184-amino-acid chain: Large ribosomal subunit protein uL10 (184 aa).

Belongs to the universal ribosomal protein uL10 family. As to quaternary structure, part of the ribosomal stalk of the 50S ribosomal subunit. The N-terminus interacts with L11 and the large rRNA to form the base of the stalk. The C-terminus forms an elongated spine to which L12 dimers bind in a sequential fashion forming a multimeric L10(L12)X complex.

Forms part of the ribosomal stalk, playing a central role in the interaction of the ribosome with GTP-bound translation factors. The sequence is that of Large ribosomal subunit protein uL10 from Gluconobacter oxydans (strain 621H) (Gluconobacter suboxydans).